The following is a 28-amino-acid chain: Kalata-B12 (28 aa).

A cross-link (cyclopeptide (Gly-Asp)) is located at residues 1 to 28 (GSLCGDTCFVLGCNDSSCSCNYPICVKD). Disulfide bonds link cysteine 4–cysteine 18, cysteine 8–cysteine 20, and cysteine 13–cysteine 25.

In terms of processing, this is a cyclic peptide.

Functionally, probably participates in a plant defense mechanism. This Oldenlandia affinis protein is Kalata-B12.